The sequence spans 213 residues: Pyridoxine/pyridoxamine 5'-phosphate oxidase (213 aa).

Residues 10-13 and Lys-68 each bind substrate; that span reads REEY. Residues 63-68, 78-79, Lys-85, and Gln-107 contribute to the FMN site; these read RMLLLK and FT. 3 residues coordinate substrate: Tyr-125, Arg-129, and Ser-133. FMN contacts are provided by residues 142-143 and Trp-186; that span reads QS. Residue 192-194 coordinates substrate; that stretch reads RLH. An FMN-binding site is contributed by Arg-196.

It belongs to the pyridoxamine 5'-phosphate oxidase family. Homodimer. FMN is required as a cofactor.

It carries out the reaction pyridoxamine 5'-phosphate + O2 + H2O = pyridoxal 5'-phosphate + H2O2 + NH4(+). It catalyses the reaction pyridoxine 5'-phosphate + O2 = pyridoxal 5'-phosphate + H2O2. It participates in cofactor metabolism; pyridoxal 5'-phosphate salvage; pyridoxal 5'-phosphate from pyridoxamine 5'-phosphate: step 1/1. Its pathway is cofactor metabolism; pyridoxal 5'-phosphate salvage; pyridoxal 5'-phosphate from pyridoxine 5'-phosphate: step 1/1. Its function is as follows. Catalyzes the oxidation of either pyridoxine 5'-phosphate (PNP) or pyridoxamine 5'-phosphate (PMP) into pyridoxal 5'-phosphate (PLP). This Nocardioides sp. (strain ATCC BAA-499 / JS614) protein is Pyridoxine/pyridoxamine 5'-phosphate oxidase.